A 730-amino-acid chain; its full sequence is Catalase-peroxidase (730 aa).

The segment at residues 95 to 218 (WHSAGTYRVG…LAAVQMGLIY (124 aa)) is a cross-link (tryptophyl-tyrosyl-methioninium (Trp-Tyr) (with M-244)). His96 (proton acceptor) is an active-site residue. The segment at residues 218 to 244 (YVNPEGPNGNPDPLGSAHDVRETFARM) is a cross-link (tryptophyl-tyrosyl-methioninium (Tyr-Met) (with W-95)). His259 serves as a coordination point for heme b.

It belongs to the peroxidase family. Peroxidase/catalase subfamily. As to quaternary structure, homodimer or homotetramer. Heme b is required as a cofactor. Post-translationally, formation of the three residue Trp-Tyr-Met cross-link is important for the catalase, but not the peroxidase activity of the enzyme.

It catalyses the reaction H2O2 + AH2 = A + 2 H2O. The catalysed reaction is 2 H2O2 = O2 + 2 H2O. In terms of biological role, bifunctional enzyme with both catalase and broad-spectrum peroxidase activity. This Clostridium botulinum (strain Eklund 17B / Type B) protein is Catalase-peroxidase.